A 257-amino-acid polypeptide reads, in one-letter code: Imidazole glycerol phosphate synthase subunit HisF (257 aa).

Catalysis depends on residues Asp-11 and Asp-130.

This sequence belongs to the HisA/HisF family. In terms of assembly, heterodimer of HisH and HisF.

It localises to the cytoplasm. The enzyme catalyses 5-[(5-phospho-1-deoxy-D-ribulos-1-ylimino)methylamino]-1-(5-phospho-beta-D-ribosyl)imidazole-4-carboxamide + L-glutamine = D-erythro-1-(imidazol-4-yl)glycerol 3-phosphate + 5-amino-1-(5-phospho-beta-D-ribosyl)imidazole-4-carboxamide + L-glutamate + H(+). It functions in the pathway amino-acid biosynthesis; L-histidine biosynthesis; L-histidine from 5-phospho-alpha-D-ribose 1-diphosphate: step 5/9. IGPS catalyzes the conversion of PRFAR and glutamine to IGP, AICAR and glutamate. The HisF subunit catalyzes the cyclization activity that produces IGP and AICAR from PRFAR using the ammonia provided by the HisH subunit. The protein is Imidazole glycerol phosphate synthase subunit HisF of Aeromonas hydrophila subsp. hydrophila (strain ATCC 7966 / DSM 30187 / BCRC 13018 / CCUG 14551 / JCM 1027 / KCTC 2358 / NCIMB 9240 / NCTC 8049).